The chain runs to 438 residues: sn-glycerol-3-phosphate-binding periplasmic protein UgpB (438 aa).

An N-terminal signal peptide occupies residues 1–23; that stretch reads MKPLRYTASALALGLALMANAQA. Sn-glycerol 3-phosphate contacts are provided by Tyr65, Glu89, Ser144, Ser270, Gly307, Tyr346, and Arg397.

Belongs to the bacterial solute-binding protein 1 family. In terms of assembly, the complex is composed of two ATP-binding proteins (UgpC), two transmembrane proteins (UgpA and UgpE) and a solute-binding protein (UgpB).

The protein resides in the periplasm. Part of the ABC transporter complex UgpBAEC involved in sn-glycerol-3-phosphate (G3P) import. Binds G3P. The polypeptide is sn-glycerol-3-phosphate-binding periplasmic protein UgpB (ugpB) (Escherichia coli O6:K15:H31 (strain 536 / UPEC)).